We begin with the raw amino-acid sequence, 513 residues long: ATP synthase subunit alpha (513 aa).

169–176 contributes to the ATP binding site; sequence GDRQCGKT.

It belongs to the ATPase alpha/beta chains family. In terms of assembly, F-type ATPases have 2 components, CF(1) - the catalytic core - and CF(0) - the membrane proton channel. CF(1) has five subunits: alpha(3), beta(3), gamma(1), delta(1), epsilon(1). CF(0) has three main subunits: a(1), b(2) and c(9-12). The alpha and beta chains form an alternating ring which encloses part of the gamma chain. CF(1) is attached to CF(0) by a central stalk formed by the gamma and epsilon chains, while a peripheral stalk is formed by the delta and b chains.

The protein resides in the cell inner membrane. It catalyses the reaction ATP + H2O + 4 H(+)(in) = ADP + phosphate + 5 H(+)(out). In terms of biological role, produces ATP from ADP in the presence of a proton gradient across the membrane. The alpha chain is a regulatory subunit. In Burkholderia cenocepacia (strain ATCC BAA-245 / DSM 16553 / LMG 16656 / NCTC 13227 / J2315 / CF5610) (Burkholderia cepacia (strain J2315)), this protein is ATP synthase subunit alpha.